The sequence spans 550 residues: Hydroxylamine reductase (550 aa).

Cys-3, Cys-6, Cys-18, and Cys-25 together coordinate [2Fe-2S] cluster. The hybrid [4Fe-2O-2S] cluster site is built by His-249, Glu-273, Cys-317, Cys-405, Cys-433, Cys-458, Glu-492, and Lys-494. Cys-405 is subject to Cysteine persulfide.

Belongs to the HCP family. It depends on [2Fe-2S] cluster as a cofactor. Requires hybrid [4Fe-2O-2S] cluster as cofactor.

The protein localises to the cytoplasm. It carries out the reaction A + NH4(+) + H2O = hydroxylamine + AH2 + H(+). In terms of biological role, catalyzes the reduction of hydroxylamine to form NH(3) and H(2)O. This chain is Hydroxylamine reductase, found in Escherichia coli (strain SE11).